A 158-amino-acid polypeptide reads, in one-letter code: 2-C-methyl-D-erythritol 2,4-cyclodiphosphate synthase (158 aa).

Positions 9 and 11 each coordinate a divalent metal cation. Residues 9–11 (DVH) and 35–36 (HS) each bind 4-CDP-2-C-methyl-D-erythritol 2-phosphate. Histidine 43 is a binding site for a divalent metal cation. 4-CDP-2-C-methyl-D-erythritol 2-phosphate is bound by residues 57–59 (DIG), 62–66 (FPDTD), 133–136 (TTTE), phenylalanine 140, and arginine 143.

The protein belongs to the IspF family. As to quaternary structure, homotrimer. The cofactor is a divalent metal cation.

The catalysed reaction is 4-CDP-2-C-methyl-D-erythritol 2-phosphate = 2-C-methyl-D-erythritol 2,4-cyclic diphosphate + CMP. It participates in isoprenoid biosynthesis; isopentenyl diphosphate biosynthesis via DXP pathway; isopentenyl diphosphate from 1-deoxy-D-xylulose 5-phosphate: step 4/6. Its function is as follows. Involved in the biosynthesis of isopentenyl diphosphate (IPP) and dimethylallyl diphosphate (DMAPP), two major building blocks of isoprenoid compounds. Catalyzes the conversion of 4-diphosphocytidyl-2-C-methyl-D-erythritol 2-phosphate (CDP-ME2P) to 2-C-methyl-D-erythritol 2,4-cyclodiphosphate (ME-CPP) with a corresponding release of cytidine 5-monophosphate (CMP). The chain is 2-C-methyl-D-erythritol 2,4-cyclodiphosphate synthase from Actinobacillus pleuropneumoniae serotype 5b (strain L20).